The primary structure comprises 216 residues: 2-phospho-L-lactate guanylyltransferase (216 aa).

This sequence belongs to the CofC family. As to quaternary structure, homodimer.

The catalysed reaction is (2S)-2-phospholactate + GTP + H(+) = (2S)-lactyl-2-diphospho-5'-guanosine + diphosphate. It participates in cofactor biosynthesis; coenzyme F420 biosynthesis. Functionally, guanylyltransferase that catalyzes the activation of (2S)-2-phospholactate (2-PL) as (2S)-lactyl-2-diphospho-5'-guanosine, via the condensation of 2-PL with GTP. It is involved in the biosynthesis of coenzyme F420, a hydride carrier cofactor. This chain is 2-phospho-L-lactate guanylyltransferase, found in Methanocaldococcus infernus (strain DSM 11812 / JCM 15783 / ME).